Consider the following 409-residue polypeptide: 5-aminolevulinate synthase (409 aa).

Residues Arg21, Ser137, and Lys156 each contribute to the succinyl-CoA site. Ser189, His217, and Thr245 together coordinate pyridoxal 5'-phosphate. Lys248 is an active-site residue. Lys248 is modified (N6-(pyridoxal phosphate)lysine). The pyridoxal 5'-phosphate site is built by Ser277 and Thr278. Thr365 contributes to the succinyl-CoA binding site.

This sequence belongs to the class-II pyridoxal-phosphate-dependent aminotransferase family. Homodimer. Pyridoxal 5'-phosphate serves as cofactor.

The enzyme catalyses succinyl-CoA + glycine + H(+) = 5-aminolevulinate + CO2 + CoA. It participates in porphyrin-containing compound metabolism; protoporphyrin-IX biosynthesis; 5-aminolevulinate from glycine: step 1/1. In Rhodobacter capsulatus (strain ATCC BAA-309 / NBRC 16581 / SB1003), this protein is 5-aminolevulinate synthase (hemA).